We begin with the raw amino-acid sequence, 197 residues long: Small ribosomal subunit protein uS10c (197 aa).

The N-terminal 60 residues, 1–60, are a transit peptide targeting the chloroplast; sequence MATSSLSTIVFSPLALSNSSSFPNKPQVSNLSLHSSLSNLRRTLSHSSPSSSSSSNVRVF. The interval 67–91 is disordered; sequence ESQETGPESYVEEGSETSALGIGAD.

It belongs to the universal ribosomal protein uS10 family. In terms of assembly, part of the 30S ribosomal subunit.

It localises to the plastid. Its subcellular location is the chloroplast. This chain is Small ribosomal subunit protein uS10c (RPS10), found in Mesembryanthemum crystallinum (Common ice plant).